A 376-amino-acid chain; its full sequence is tRNA-specific 2-thiouridylase MnmA (376 aa).

Residues 16-23 and Leu42 each bind ATP; that span reads AMSGGVDS. The Nucleophile role is filled by Cys111. Cys111 and Cys210 are disulfide-bonded. Position 135 (Gly135) interacts with ATP. The interval 158 to 160 is interaction with tRNA; that stretch reads KDQ. Residue Cys210 is the Cysteine persulfide intermediate of the active site.

It belongs to the MnmA/TRMU family.

Its subcellular location is the cytoplasm. The catalysed reaction is S-sulfanyl-L-cysteinyl-[protein] + uridine(34) in tRNA + AH2 + ATP = 2-thiouridine(34) in tRNA + L-cysteinyl-[protein] + A + AMP + diphosphate + H(+). In terms of biological role, catalyzes the 2-thiolation of uridine at the wobble position (U34) of tRNA, leading to the formation of s(2)U34. This Streptomyces coelicolor (strain ATCC BAA-471 / A3(2) / M145) protein is tRNA-specific 2-thiouridylase MnmA.